We begin with the raw amino-acid sequence, 306 residues long: Agmatinase (306 aa).

Histidine 126, aspartate 149, histidine 151, aspartate 153, aspartate 230, and aspartate 232 together coordinate Mn(2+).

It belongs to the arginase family. Agmatinase subfamily. Mn(2+) serves as cofactor.

The enzyme catalyses agmatine + H2O = urea + putrescine. It participates in amine and polyamine biosynthesis; putrescine biosynthesis via agmatine pathway; putrescine from agmatine: step 1/1. Catalyzes the formation of putrescine from agmatine. This Shigella boydii serotype 18 (strain CDC 3083-94 / BS512) protein is Agmatinase.